A 609-amino-acid chain; its full sequence is Threonine--tRNA ligase (609 aa).

The segment at 1-143 (MRVLYLHTER…SFKPGDSRAE (143 aa)) is editing domain. Catalytic stretches follow at residues 195-491 (PRYL…PRLP) and 196-491 (RYLE…PRLP). Zn(2+) contacts are provided by C288, H339, and H460.

The protein belongs to the class-II aminoacyl-tRNA synthetase family. In terms of assembly, homodimer. Requires Zn(2+) as cofactor.

Its subcellular location is the cytoplasm. It catalyses the reaction tRNA(Thr) + L-threonine + ATP = L-threonyl-tRNA(Thr) + AMP + diphosphate + H(+). Catalyzes the attachment of threonine to tRNA(Thr) in a two-step reaction: L-threonine is first activated by ATP to form Thr-AMP and then transferred to the acceptor end of tRNA(Thr). Also edits incorrectly charged L-seryl-tRNA(Thr). The sequence is that of Threonine--tRNA ligase from Pyrobaculum neutrophilum (strain DSM 2338 / JCM 9278 / NBRC 100436 / V24Sta) (Thermoproteus neutrophilus).